Here is a 448-residue protein sequence, read N- to C-terminus: Phosphoglucosamine mutase (448 aa).

The active-site Phosphoserine intermediate is the S99. Residues S99, D238, D240, and D242 each coordinate Mg(2+). S99 carries the phosphoserine modification.

The protein belongs to the phosphohexose mutase family. It depends on Mg(2+) as a cofactor. Post-translationally, activated by phosphorylation.

The catalysed reaction is alpha-D-glucosamine 1-phosphate = D-glucosamine 6-phosphate. Its function is as follows. Catalyzes the conversion of glucosamine-6-phosphate to glucosamine-1-phosphate. This is Phosphoglucosamine mutase from Marinomonas sp. (strain MWYL1).